Reading from the N-terminus, the 212-residue chain is Small ribosomal subunit protein eS1 (212 aa).

The protein belongs to the eukaryotic ribosomal protein eS1 family.

The sequence is that of Small ribosomal subunit protein eS1 from Haloquadratum walsbyi (strain DSM 16790 / HBSQ001).